A 237-amino-acid polypeptide reads, in one-letter code: CDP-diacylglycerol--serine O-phosphatidyltransferase (237 aa).

The next 8 membrane-spanning stretches (helical) occupy residues 3–23 (INPLYLFPNLFTASSIFLGMM), 25–45 (IFYASSYQFVMACWLVVASLI), 73–93 (VIAFGVAPSLIAYFYVGYNFG), 95–115 (IGMAVSALFVIFGAIRLARFN), 124–144 (YSFIGIPIPAAAVLVVLCVLL), 150–170 (FLEGNTEKLFLSFIVLLGVLM), 184–204 (WNLKLFILVLIFLSLVFVRPL), and 207–227 (LSVFMGLYLIYGIIRWLFLMV).

Belongs to the CDP-alcohol phosphatidyltransferase class-I family.

Its subcellular location is the cell membrane. The catalysed reaction is a CDP-1,2-diacyl-sn-glycerol + L-serine = a 1,2-diacyl-sn-glycero-3-phospho-L-serine + CMP + H(+). The protein is CDP-diacylglycerol--serine O-phosphatidyltransferase (pssA) of Helicobacter pylori (strain ATCC 700392 / 26695) (Campylobacter pylori).